A 315-amino-acid polypeptide reads, in one-letter code: Putative ankyrin repeat protein R600 (315 aa).

ANK repeat units lie at residues 79–108, 118–152, 153–182, 184–211, and 212–240; these read NECR…NVHV, SGFG…MVGT, DTCN…DIFS, QSKL…DVTD, and DNNS…DMNT.

The chain is Putative ankyrin repeat protein R600 from Acanthamoeba polyphaga mimivirus (APMV).